The sequence spans 44 residues: Photosystem II reaction center protein K (44 aa).

A propeptide spanning residues 1–7 (MESLLLA) is cleaved from the precursor. Residues 23–43 (FPVIPVFFLLLAFVWQAAVGF) form a helical membrane-spanning segment.

The protein belongs to the PsbK family. In terms of assembly, PSII is composed of 1 copy each of membrane proteins PsbA, PsbB, PsbC, PsbD, PsbE, PsbF, PsbH, PsbI, PsbJ, PsbK, PsbL, PsbM, PsbT, PsbX, PsbY, PsbZ, Psb30/Ycf12, at least 3 peripheral proteins of the oxygen-evolving complex and a large number of cofactors. It forms dimeric complexes.

Its subcellular location is the plastid. The protein localises to the chloroplast thylakoid membrane. Its function is as follows. One of the components of the core complex of photosystem II (PSII). PSII is a light-driven water:plastoquinone oxidoreductase that uses light energy to abstract electrons from H(2)O, generating O(2) and a proton gradient subsequently used for ATP formation. It consists of a core antenna complex that captures photons, and an electron transfer chain that converts photonic excitation into a charge separation. The protein is Photosystem II reaction center protein K of Thalassiosira pseudonana (Marine diatom).